Consider the following 898-residue polypeptide: Nitrate reductase [NAD(P)H] (898 aa).

Residues 1–15 (MAASVENRRFTHHEP) show a composition bias toward basic and acidic residues. The segment at 1-65 (MAASVENRRF…SSSEDENEND (65 aa)) is disordered. Mo-molybdopterin is bound at residue C180. Residues 528–603 (SKMFSMSEVK…LEDYRIGELI (76 aa)) enclose the Cytochrome b5 heme-binding domain. Positions 563 and 586 each coordinate heme. The FAD-binding FR-type domain maps to 642–754 (GAKIPTKLVY…KGPLGHVEYT (113 aa)). FAD is bound by residues 694-697 (RAYT), 711-715 (VVKIY), F716, F723, 728-730 (LMS), and T781.

This sequence belongs to the nitrate reductase family. In terms of assembly, homodimer. It depends on FAD as a cofactor. Requires heme as cofactor. The cofactor is Mo-molybdopterin.

It carries out the reaction nitrite + NAD(+) + H2O = nitrate + NADH + H(+). It catalyses the reaction nitrite + NADP(+) + H2O = nitrate + NADPH + H(+). Its function is as follows. Nitrate reductase is a key enzyme involved in the first step of nitrate assimilation in plants, fungi and bacteria. This chain is Nitrate reductase [NAD(P)H] (NIA1), found in Betula pendula (European white birch).